Consider the following 88-residue polypeptide: Small ribosomal subunit protein uS17 (88 aa).

Belongs to the universal ribosomal protein uS17 family. In terms of assembly, part of the 30S ribosomal subunit.

One of the primary rRNA binding proteins, it binds specifically to the 5'-end of 16S ribosomal RNA. This Hahella chejuensis (strain KCTC 2396) protein is Small ribosomal subunit protein uS17.